The following is a 159-amino-acid chain: Phosphopantetheine adenylyltransferase (159 aa).

Ser9 is a binding site for substrate. ATP is bound by residues 9–10 and His17; that span reads SF. Substrate is bound by residues Lys41, Leu73, and Lys87. ATP-binding positions include 88-90, Glu98, and 122-128; these read GLR and YSFLSSS.

The protein belongs to the bacterial CoaD family. In terms of assembly, homohexamer. The cofactor is Mg(2+).

The protein localises to the cytoplasm. The enzyme catalyses (R)-4'-phosphopantetheine + ATP + H(+) = 3'-dephospho-CoA + diphosphate. It participates in cofactor biosynthesis; coenzyme A biosynthesis; CoA from (R)-pantothenate: step 4/5. Its function is as follows. Reversibly transfers an adenylyl group from ATP to 4'-phosphopantetheine, yielding dephospho-CoA (dPCoA) and pyrophosphate. This Streptomyces coelicolor (strain ATCC BAA-471 / A3(2) / M145) protein is Phosphopantetheine adenylyltransferase.